Consider the following 77-residue polypeptide: MKVAANTSKMLVEKLDLLKGGRRRRRRSRRRRRSRRRRSRSPYRRRYRRRRRRRRSRRRRRYRRRRSYSRRRYRRRR.

The segment at 1-21 (MKVAANTSKMLVEKLDLLKGG) is hydrophobic. A disordered region spans residues 1 to 77 (MKVAANTSKM…YSRRRYRRRR (77 aa)). The segment covering 20 to 77 (GGRRRRRRSRRRRRSRRRRSRSPYRRRYRRRRRRRRSRRRRRYRRRRSYSRRRYRRRR) has biased composition (basic residues).

Phosphorylation occurs at different degrees. The triphosphorylated form may be predominant in T2. SP2 appears to be phosphorylated in elongated spermatids, but dephosphorylated in mature sperm cells. In terms of tissue distribution, testis.

The protein localises to the nucleus. It is found in the chromosome. In terms of biological role, cuttlefish spermiogenesis is characterized by a double nuclear protein transition: histones -&gt; spermatid-specific proteins (T1/T2) -&gt; protamines (SP1/SP2). The protamines compact sperm DNA into a highly condensed, stable and inactive complex. The sequence is that of Spermatid-specific protein T2 from Sepia officinalis (Common cuttlefish).